An 800-amino-acid polypeptide reads, in one-letter code: uncharacterized protein (800 aa).

The first 21 residues, 1–21 (MNRFFISTLLLLAQHLAPAAA), serve as a signal peptide directing secretion. The span at 63 to 72 (SLSTGSPVEI) shows a compositional bias: polar residues. Disordered stretches follow at residues 63–470 (SLST…PLTT), 602–670 (TPIT…SSTS), and 710–776 (SSLS…TPSS). Low complexity-rich tracts occupy residues 73-314 (TSTS…SSTS), 321-368 (STSS…SSTS), 375-444 (STSS…TSTP), and 451-470 (TTST…PLTT). Over residues 710-720 (SSLSSIPNNST) the composition is skewed to low complexity. A compositionally biased stretch (polar residues) spans 721 to 734 (EVKTASTSSGTEIK). Residues 735 to 776 (TASTSSGSSSSSSYTPASSTSTTTSSVSSRQSSSSSSFTPSS) show a composition bias toward low complexity.

It is found in the secreted. Its subcellular location is the cell surface. This is an uncharacterized protein from Schizosaccharomyces pombe (strain 972 / ATCC 24843) (Fission yeast).